The chain runs to 246 residues: Polyhedrin (246 aa).

This sequence belongs to the polyhedrin family.

Its function is as follows. Major component of the virus occlusion bodies, which are large proteinaceous structures (polyhedra), that protect the virus from the outside environment for extended periods until they are ingested by insect larvae. This is Polyhedrin (PH) from Heliothis zea nuclear polyhedrosis virus (HzSNPV).